Here is a 411-residue protein sequence, read N- to C-terminus: Gamma-glutamyl phosphate reductase (411 aa).

The protein belongs to the gamma-glutamyl phosphate reductase family.

The protein localises to the cytoplasm. The enzyme catalyses L-glutamate 5-semialdehyde + phosphate + NADP(+) = L-glutamyl 5-phosphate + NADPH + H(+). The protein operates within amino-acid biosynthesis; L-proline biosynthesis; L-glutamate 5-semialdehyde from L-glutamate: step 2/2. In terms of biological role, catalyzes the NADPH-dependent reduction of L-glutamate 5-phosphate into L-glutamate 5-semialdehyde and phosphate. The product spontaneously undergoes cyclization to form 1-pyrroline-5-carboxylate. The chain is Gamma-glutamyl phosphate reductase from Nautilia profundicola (strain ATCC BAA-1463 / DSM 18972 / AmH).